The primary structure comprises 130 residues: Fluoride-specific ion channel FluC (130 aa).

A run of 4 helical transmembrane segments spans residues Gly-2–Leu-22, Gly-36–Ile-56, Phe-71–Ile-91, and Ile-100–Leu-120. Residues Gly-79 and Thr-82 each contribute to the Na(+) site.

It belongs to the fluoride channel Fluc/FEX (TC 1.A.43) family.

It localises to the cell inner membrane. It catalyses the reaction fluoride(in) = fluoride(out). Na(+) is not transported, but it plays an essential structural role and its presence is essential for fluoride channel function. Functionally, fluoride-specific ion channel. Important for reducing fluoride concentration in the cell, thus reducing its toxicity. The sequence is that of Fluoride-specific ion channel FluC from Francisella tularensis subsp. tularensis (strain FSC 198).